The sequence spans 410 residues: Cysteine desulfurase IscS (410 aa).

Residues 80-81 (AT), Asn160, Gln188, and 208-210 (SGH) each bind pyridoxal 5'-phosphate. The residue at position 211 (Lys211) is an N6-(pyridoxal phosphate)lysine. Thr248 is a binding site for pyridoxal 5'-phosphate. Cys334 acts as the Cysteine persulfide intermediate in catalysis. Position 334 (Cys334) interacts with [2Fe-2S] cluster.

The protein belongs to the class-V pyridoxal-phosphate-dependent aminotransferase family. NifS/IscS subfamily. In terms of assembly, homodimer. Forms a heterotetramer with IscU, interacts with other sulfur acceptors. The cofactor is pyridoxal 5'-phosphate.

Its subcellular location is the cytoplasm. The enzyme catalyses (sulfur carrier)-H + L-cysteine = (sulfur carrier)-SH + L-alanine. It functions in the pathway cofactor biosynthesis; iron-sulfur cluster biosynthesis. Master enzyme that delivers sulfur to a number of partners involved in Fe-S cluster assembly, tRNA modification or cofactor biosynthesis. Catalyzes the removal of elemental sulfur atoms from cysteine to produce alanine. Functions as a sulfur delivery protein for Fe-S cluster synthesis onto IscU, an Fe-S scaffold assembly protein, as well as other S acceptor proteins. The protein is Cysteine desulfurase IscS of Rickettsia massiliae (strain Mtu5).